Consider the following 24-residue polypeptide: Grammistin Gs G (24 aa).

Belongs to the grammistin family. Group 1 subfamily. In terms of assembly, exists as aggregates of 3-4 molecules. In terms of tissue distribution, expressed by the skin glands.

The protein localises to the secreted. Thanks to its abundant amphiphilic alpha-helices, it may integrate into membrane phospholipids, leading to lysis of the membrane. Its high hemolytic activity is inhibited by phospholipids, but not by cholesterol. Has antibacterial activity with a broad spectrum against various species of bacteria including both Gram-positive and Gram-negative groups. Also has high ichthyotoxic activity. This chain is Grammistin Gs G, found in Grammistes sexlineatus (Goldenstriped soapfish).